The following is a 579-amino-acid chain: Laccase-4 (579 aa).

The signal sequence occupies residues 1–28 (MTMAISSALPSPLLLAASLLLLIVQAQG). Plastocyanin-like domains lie at 36-152 (NVQM…PKLG) and 162-316 (KEVP…YENP). N-linked (GlcNAc...) asparagine glycosylation is found at N41 and N82. Positions 86 and 88 each coordinate Cu cation. N-linked (GlcNAc...) asparagine glycosylation occurs at N118. The Cu cation site is built by H131 and H133. 12 N-linked (GlcNAc...) asparagine glycosylation sites follow: N191, N207, N243, N304, N340, N347, N386, N393, N403, N439, N446, and N462. The Plastocyanin-like 3 domain occupies 429 to 563 (DFPVAPLSPF…RMAWLVLDGS (135 aa)). H480, H483, H485, H542, C543, H544, and H548 together coordinate Cu cation.

This sequence belongs to the multicopper oxidase family. Cu cation is required as a cofactor.

The protein resides in the secreted. It is found in the extracellular space. Its subcellular location is the apoplast. The enzyme catalyses 4 hydroquinone + O2 = 4 benzosemiquinone + 2 H2O. Its function is as follows. Lignin degradation and detoxification of lignin-derived products. In Oryza sativa subsp. japonica (Rice), this protein is Laccase-4 (LAC4).